We begin with the raw amino-acid sequence, 103 residues long: Small ribosomal subunit protein uS10 (103 aa).

This sequence belongs to the universal ribosomal protein uS10 family. In terms of assembly, part of the 30S ribosomal subunit.

Its function is as follows. Involved in the binding of tRNA to the ribosomes. This is Small ribosomal subunit protein uS10 from Acinetobacter baumannii (strain AB307-0294).